Reading from the N-terminus, the 473-residue chain is ATP synthase subunit beta (473 aa).

ATP is bound at residue 153–160 (GGAGVGKT).

This sequence belongs to the ATPase alpha/beta chains family. F-type ATPases have 2 components, CF(1) - the catalytic core - and CF(0) - the membrane proton channel. CF(1) has five subunits: alpha(3), beta(3), gamma(1), delta(1), epsilon(1). CF(0) has three main subunits: a(1), b(2) and c(9-12). The alpha and beta chains form an alternating ring which encloses part of the gamma chain. CF(1) is attached to CF(0) by a central stalk formed by the gamma and epsilon chains, while a peripheral stalk is formed by the delta and b chains.

Its subcellular location is the cell inner membrane. It carries out the reaction ATP + H2O + 4 H(+)(in) = ADP + phosphate + 5 H(+)(out). Its function is as follows. Produces ATP from ADP in the presence of a proton gradient across the membrane. The catalytic sites are hosted primarily by the beta subunits. The chain is ATP synthase subunit beta from Rickettsia bellii (strain OSU 85-389).